Reading from the N-terminus, the 275-residue chain is Arylalkylamine N-acetyltransferase 1 (275 aa).

Acetyl-CoA-binding positions include 181 to 183 and 189 to 193; these read LSV and GLGIA. Residues 181–254 form the N-acetyltransferase domain; it reads LSVDTNYRGL…GEVVFKPAAP (74 aa).

This sequence belongs to the acetyltransferase family. AANAT subfamily. In terms of tissue distribution, in the adult, expressed in the midgut portion of the thoracic segments and the frontal half of the abdomen (at protein level). Expressed in the epithelial cell layer facing the lumen of the gut (at protein level). In the brain, expressed in a sub-populations of neurons and astrocytes, and in a set of distinct stripes in the optic lobes (at protein level). Expressed mainly in serotonergic neurons but also in subsets of glutamatergic, GABAergic and cholinergic neurons (at protein level).

Its subcellular location is the cytoplasm. It is found in the nucleus. The enzyme catalyses a 2-arylethylamine + acetyl-CoA = an N-acetyl-2-arylethylamine + CoA + H(+). It carries out the reaction serotonin + acetyl-CoA = N-acetylserotonin + CoA + H(+). The catalysed reaction is dopamine + acetyl-CoA = N-acetyldopamine + CoA + H(+). It catalyses the reaction tyramine + acetyl-CoA = N-acetyltyramine + CoA + H(+). The enzyme catalyses octopamine + acetyl-CoA = N-acetyloctopamine + CoA + H(+). It carries out the reaction 5-methoxytryptamine + acetyl-CoA = melatonin + CoA + H(+). The catalysed reaction is 2-phenylethylamine + acetyl-CoA = N-(2-phenylethyl)acetamide + CoA + H(+). It catalyses the reaction noradrenaline + acetyl-CoA = N-acetylnoradrenaline + CoA + H(+). The enzyme catalyses tyramine + butanoyl-CoA = N-butanoyltyramine + CoA + H(+). It carries out the reaction tyramine + hexanoyl-CoA = N-hexanoyltyramine + CoA + H(+). The catalysed reaction is tryptamine + acetyl-CoA = N-acetyltryptamine + CoA + H(+). It catalyses the reaction dopamine + hexadecanoyl-CoA = N-hexadecanoyl-dopamine + CoA + H(+). The enzyme catalyses dopamine + (9Z)-octadecenoyl-CoA = N-(9Z-octadecanoyl)-dopamine + CoA + H(+). It carries out the reaction serotonin + hexadecanoyl-CoA = N-hexadecanoyl-serotonin + CoA + H(+). The catalysed reaction is serotonin + (9Z)-octadecenoyl-CoA = N-(9Z-octadecenoyl)-serotonin + CoA + H(+). It catalyses the reaction serotonin + octadecanoyl-CoA = N-octadecanoyl-serotonin + CoA + H(+). The enzyme catalyses serotonin + (5Z,8Z,11Z,14Z)-eicosatetraenoyl-CoA = N-[(5Z,8Z,11Z,14Z)-eicosatetraenoyl]-serotonin + CoA + H(+). It participates in aromatic compound metabolism; melatonin biosynthesis; melatonin from serotonin: step 1/2. With respect to regulation, inhibited by long-chain acyl-CoA thioesters, oleoyl-CoA (an analog of acetyl-CoA) and tyrosol (an analog of tyramine). Catalyzes N-acetylation of tryptamine, tyramine, dopamine, serotonin and octopamine. In astrocytes, regulates sleep homeostasis by limiting the accumulation of serotonin and dopamine in the brain upon sleep deprivation. Is not essential for sclerotization. This is Arylalkylamine N-acetyltransferase 1 from Drosophila melanogaster (Fruit fly).